Here is a 212-residue protein sequence, read N- to C-terminus: Imidazole glycerol phosphate synthase subunit HisH 2 (212 aa).

Residues 4 to 211 form the Glutamine amidotransferase type-1 domain; sequence HLGLIDYGMG…LDWLQRGAPI (208 aa). Cysteine 82 (nucleophile) is an active-site residue. Residues histidine 186 and glutamate 188 contribute to the active site.

In terms of assembly, heterodimer of HisH and HisF.

It is found in the cytoplasm. The enzyme catalyses 5-[(5-phospho-1-deoxy-D-ribulos-1-ylimino)methylamino]-1-(5-phospho-beta-D-ribosyl)imidazole-4-carboxamide + L-glutamine = D-erythro-1-(imidazol-4-yl)glycerol 3-phosphate + 5-amino-1-(5-phospho-beta-D-ribosyl)imidazole-4-carboxamide + L-glutamate + H(+). The catalysed reaction is L-glutamine + H2O = L-glutamate + NH4(+). It participates in amino-acid biosynthesis; L-histidine biosynthesis; L-histidine from 5-phospho-alpha-D-ribose 1-diphosphate: step 5/9. In terms of biological role, IGPS catalyzes the conversion of PRFAR and glutamine to IGP, AICAR and glutamate. The HisH subunit provides the glutamine amidotransferase activity that produces the ammonia necessary to HisF for the synthesis of IGP and AICAR. The polypeptide is Imidazole glycerol phosphate synthase subunit HisH 2 (hisH2) (Parasynechococcus marenigrum (strain WH8102)).